The chain runs to 397 residues: GDNF family receptor alpha-3 (397 aa).

A signal peptide spans 1–28; the sequence is MGLSWSPRPPLLMILLLVLSLWLPLGAG. Cysteines 48 and 54 form a disulfide. Asn92 and Asn145 each carry an N-linked (GlcNAc...) asparagine glycan. Cystine bridges form between Cys159–Cys215, Cys166–Cys172, Cys183–Cys193, Cys188–Cys236, Cys217–Cys224, Cys245–Cys313, Cys252–Cys258, Cys269–Cys285, Cys278–Cys337, and Cys315–Cys325. Asn306 carries N-linked (GlcNAc...) asparagine glycosylation. Asn371 is lipidated: GPI-anchor amidated asparagine. A propeptide spans 372-397 (removed in mature form); the sequence is PALRLQPRLPILSFSILPLILLQTLW.

This sequence belongs to the GDNFR family. As to quaternary structure, interacts with ARTN ligand and RET: forms a 2:2:2 ternary complex composed of ARTN ligand, GFRA3 and RET receptor. Interacts with SORL1.

It is found in the cell membrane. In terms of biological role, receptor for artemin (ARTN), a growth factor that supports the survival of sensory and sympathetic peripheral neurons. ARTN-binding leads to autophosphorylation and activation of the RET receptor. The sequence is that of GDNF family receptor alpha-3 (Gfra3) from Mus musculus (Mouse).